We begin with the raw amino-acid sequence, 1092 residues long: Probable cellulose synthase A catalytic subunit 5 [UDP-forming] (1092 aa).

Residues 1-279 lie on the Cytoplasmic side of the membrane; that stretch reads MEASAGLVAG…SSSLVNPYRM (279 aa). Residues C39, C42, C58, C61, C66, C69, C81, and C84 each coordinate Zn(2+). The segment at 39-85 adopts an RING-type; degenerate zinc-finger fold; the sequence is CQICGDDVGLTPDGEPFVACNECAFPVCRDCYEYERREGTQNCPQCK. Residues 280–300 traverse the membrane as a helical segment; it reads IIIIRLVVLGFFFHYRVMHPV. Over 301–302 the chain is Extracellular; that stretch reads PD. A helical membrane pass occupies residues 303–323; that stretch reads AFALWLISVICEIWFAMSWIL. The Cytoplasmic portion of the chain corresponds to 324–868; it reads DQFPKWFPIE…CLERFSYINS (545 aa). UDP-alpha-D-glucose contacts are provided by S362, K368, E369, and D398. D398 is a catalytic residue. Residues 450–479 adopt a coiled-coil conformation; sequence NFVRERRAMKREYEEFKVRINALVAKAQKV. Position 539 (K539) interacts with UDP-alpha-D-glucose. 2 residues coordinate Mn(2+): K540 and D564. Residue D792 is part of the active site. The helical transmembrane segment at 869-889 threads the bilayer; the sequence is IVYPWTSIPLLAYCTLPAICL. Over 890–901 the chain is Extracellular; it reads LTGKFITPELTN. Residues 902 to 922 traverse the membrane as a helical segment; the sequence is IASLWFMSLFICIFATGILEM. Topologically, residues 923-938 are cytoplasmic; the sequence is RWSGVGIDDWWRNEQF. Residues 939–959 traverse the membrane as a helical segment; it reads WVIGGVSSHLFAVFQGLLKVI. At 960–987 the chain is on the extracellular side; the sequence is AGIDTSFTVTSKGGDDEEFSELYTFKWT. A helical membrane pass occupies residues 988 to 1008; that stretch reads TLLIPPTTLLLLNFIGVVAGV. Residues 1009–1019 are Cytoplasmic-facing; that stretch reads SNAINNGYESW. Residues 1020-1040 traverse the membrane as a helical segment; sequence GPLFGKLFFAFWVIVHLYPFL. Residues 1041 to 1049 lie on the Extracellular side of the membrane; that stretch reads KGLVGRQNR. Residues 1050 to 1070 form a helical membrane-spanning segment; the sequence is TPTIVIVWSILLASIFSLLWV. Topologically, residues 1071–1092 are cytoplasmic; the sequence is RIDPFLAKNDGPLLEECGLDCN.

It belongs to the glycosyltransferase 2 family. Plant cellulose synthase subfamily. Mn(2+) serves as cofactor. The cofactor is Zn(2+).

It is found in the cell membrane. It carries out the reaction [(1-&gt;4)-beta-D-glucosyl](n) + UDP-alpha-D-glucose = [(1-&gt;4)-beta-D-glucosyl](n+1) + UDP + H(+). It functions in the pathway glycan metabolism; plant cellulose biosynthesis. Its function is as follows. Probable catalytic subunit of cellulose synthase terminal complexes ('rosettes'), required for beta-1,4-glucan microfibril crystallization, a major mechanism of the cell wall formation. The polypeptide is Probable cellulose synthase A catalytic subunit 5 [UDP-forming] (CESA5) (Oryza sativa subsp. indica (Rice)).